The chain runs to 470 residues: D-serine/D-alanine/glycine transporter (470 aa).

The next 12 helical transmembrane spans lie at 30–50, 51–71, 102–122, 137–157, 162–182, 211–231, 256–276, 283–303, 350–370, 371–391, 413–433, and 441–461; these read LIAI…KTIS, LAGP…FFVM, FTGW…VVAI, VASL…VKMF, FWFA…GLVM, LSGF…IELV, IIMF…WSSV, FVEL…NFVV, FSCI…SVIG, AFTM…TIIL, PLGK…VVLL, and QALL…LFIG.

Belongs to the amino acid-polyamine-organocation (APC) superfamily. Amino acid transporter (AAT) (TC 2.A.3.1) family.

The protein localises to the cell inner membrane. It carries out the reaction D-alanine(in) + H(+)(in) = D-alanine(out) + H(+)(out). The catalysed reaction is D-serine(out) + H(+)(out) = D-serine(in) + H(+)(in). The enzyme catalyses glycine(in) + H(+)(in) = glycine(out) + H(+)(out). Functionally, permease that is involved in the transport across the cytoplasmic membrane of D-alanine, D-serine and glycine. The sequence is that of D-serine/D-alanine/glycine transporter (cycA) from Escherichia coli O157:H7.